A 41-amino-acid chain; its full sequence is Sucrose porin (41 aa).

Positions 1–22 (MYRKSTLAMLIALLTSAASAHA) are cleaved as a signal peptide.

It belongs to the porin LamB (TC 1.B.3) family. In terms of assembly, homotrimer.

The protein resides in the cell outer membrane. Its function is as follows. Porin for sucrose uptake. This is Sucrose porin (scrY) from Salmonella thompson.